Reading from the N-terminus, the 123-residue chain is Small ribosomal subunit protein uS13 (123 aa).

The segment at 93-123 (HRKGLPVRGQNTKNNARTRKGPAKAIAGKKK) is disordered. A compositionally biased stretch (basic residues) spans 108-123 (ARTRKGPAKAIAGKKK).

The protein belongs to the universal ribosomal protein uS13 family. As to quaternary structure, part of the 30S ribosomal subunit. Forms a loose heterodimer with protein S19. Forms two bridges to the 50S subunit in the 70S ribosome.

In terms of biological role, located at the top of the head of the 30S subunit, it contacts several helices of the 16S rRNA. In the 70S ribosome it contacts the 23S rRNA (bridge B1a) and protein L5 of the 50S subunit (bridge B1b), connecting the 2 subunits; these bridges are implicated in subunit movement. Contacts the tRNAs in the A and P-sites. This chain is Small ribosomal subunit protein uS13, found in Leuconostoc citreum (strain KM20).